Consider the following 269-residue polypeptide: Dermonecrotic toxin SpeSicTox-betaIB3 (269 aa).

Residue His5 is part of the active site. Mg(2+) contacts are provided by Glu25 and Asp27. Residue His41 is the Nucleophile of the active site. 2 disulfides stabilise this stretch: Cys45–Cys51 and Cys47–Cys191. Asp85 provides a ligand contact to Mg(2+).

This sequence belongs to the arthropod phospholipase D family. Class II subfamily. Requires Mg(2+) as cofactor. Expressed by the venom gland.

The protein localises to the secreted. The enzyme catalyses an N-(acyl)-sphingosylphosphocholine = an N-(acyl)-sphingosyl-1,3-cyclic phosphate + choline. It carries out the reaction an N-(acyl)-sphingosylphosphoethanolamine = an N-(acyl)-sphingosyl-1,3-cyclic phosphate + ethanolamine. It catalyses the reaction a 1-acyl-sn-glycero-3-phosphocholine = a 1-acyl-sn-glycero-2,3-cyclic phosphate + choline. The catalysed reaction is a 1-acyl-sn-glycero-3-phosphoethanolamine = a 1-acyl-sn-glycero-2,3-cyclic phosphate + ethanolamine. Its function is as follows. Dermonecrotic toxins cleave the phosphodiester linkage between the phosphate and headgroup of certain phospholipids (sphingolipid and lysolipid substrates), forming an alcohol (often choline) and a cyclic phosphate. This toxin acts on sphingomyelin (SM). It may also act on ceramide phosphoethanolamine (CPE), lysophosphatidylcholine (LPC) and lysophosphatidylethanolamine (LPE), but not on lysophosphatidylserine (LPS), and lysophosphatidylglycerol (LPG). It acts by transphosphatidylation, releasing exclusively cyclic phosphate products as second products. Induces dermonecrosis, hemolysis, increased vascular permeability, edema, inflammatory response, and platelet aggregation. In Sicarius peruensis (Six-eyed sand spider), this protein is Dermonecrotic toxin SpeSicTox-betaIB3.